Consider the following 158-residue polypeptide: 2-amino-4-hydroxy-6-hydroxymethyldihydropteridine pyrophosphokinase (158 aa).

Belongs to the HPPK family.

The catalysed reaction is 6-hydroxymethyl-7,8-dihydropterin + ATP = (7,8-dihydropterin-6-yl)methyl diphosphate + AMP + H(+). It participates in cofactor biosynthesis; tetrahydrofolate biosynthesis; 2-amino-4-hydroxy-6-hydroxymethyl-7,8-dihydropteridine diphosphate from 7,8-dihydroneopterin triphosphate: step 4/4. Functionally, catalyzes the transfer of pyrophosphate from adenosine triphosphate (ATP) to 6-hydroxymethyl-7,8-dihydropterin, an enzymatic step in folate biosynthesis pathway. This Methylorubrum extorquens (strain ATCC 14718 / DSM 1338 / JCM 2805 / NCIMB 9133 / AM1) (Methylobacterium extorquens) protein is 2-amino-4-hydroxy-6-hydroxymethyldihydropteridine pyrophosphokinase (folK).